Consider the following 270-residue polypeptide: UPF0354 protein BPUM_2629 (270 aa).

The protein belongs to the UPF0354 family.

This Bacillus pumilus (strain SAFR-032) protein is UPF0354 protein BPUM_2629.